The chain runs to 571 residues: Isocitrate dehydrogenase kinase/phosphatase (571 aa).

ATP is bound by residues 318 to 324 and Lys339; that span reads APGVRGM. The active site involves Asp374.

It belongs to the AceK family.

It is found in the cytoplasm. The enzyme catalyses L-seryl-[isocitrate dehydrogenase] + ATP = O-phospho-L-seryl-[isocitrate dehydrogenase] + ADP + H(+). In terms of biological role, bifunctional enzyme which can phosphorylate or dephosphorylate isocitrate dehydrogenase (IDH) on a specific serine residue. This is a regulatory mechanism which enables bacteria to bypass the Krebs cycle via the glyoxylate shunt in response to the source of carbon. When bacteria are grown on glucose, IDH is fully active and unphosphorylated, but when grown on acetate or ethanol, the activity of IDH declines drastically concomitant with its phosphorylation. The protein is Isocitrate dehydrogenase kinase/phosphatase of Pseudomonas putida (strain ATCC 700007 / DSM 6899 / JCM 31910 / BCRC 17059 / LMG 24140 / F1).